We begin with the raw amino-acid sequence, 414 residues long: Protein ABHD18 (414 aa).

Positions 1–24 are cleaved as a signal peptide; the sequence is MGVSKLDILYRRLLLTKLFIRGWG. 2 N-linked (GlcNAc...) asparagine glycosylation sites follow: Asn282 and Asn307.

The protein belongs to the AB hydrolase superfamily.

Its subcellular location is the secreted. In Homo sapiens (Human), this protein is Protein ABHD18.